A 523-amino-acid polypeptide reads, in one-letter code: FAD-dependent monooxygenase drtC (523 aa).

The 176-residue stretch at 77–252 (TSLNSACIVL…TNFEVRAFPQ (176 aa)) folds into the FAD-binding PCMH-type domain.

This sequence belongs to the oxygen-dependent FAD-linked oxidoreductase family. The cofactor is FAD.

Its pathway is secondary metabolite biosynthesis; terpenoid biosynthesis. Its function is as follows. FAD-dependent monooxygenase; part of the gene cluster that mediates the biosynthesis of various drimane-type sesquiterpene esters, compounds that exhibit diverse biological activities and are widely present in eukaryotes. The pathway begins with the synthesis of the backbone drimenol by the terpene cyclase drtB using farnesyl pyrophosphate (FPP) as substrate. The cytochrome P450 monooxygenase drtD is then responsible for the hydroxylations at C-6, C-9 and C-12, as well as the oxidation of hydroxyl groups at C-6 and C-11 to a ketone and an aldehyde, respectively. Then, the biosynthesis can go in two directions, either the hydroxylated drimenol is further hydroxylated at C-2 and C-3 by an enzyme(s) not associated with the drt cluster, or the FAD-binding oxidoreductase drtC further oxidizes C-11 or C-12 to form the butyrolactone ring. DrtB, drtD and drtC are solely responsible for the formation of the different drimane structures observed during drimane sesquiterpenes biosynthesis. The polyketide synthase drtA synthesizes different lengths (C6 and C8) of PKS chains, which are then oxidized to varying degrees by the short-chain dehydrogenase drtF. Finally, these PKS chains are transferred onto drimane sesquiterpenes by the acyltransferase drtE, forming the sesquiterpene esters. In addition to the different fatty acyl-CoA chains produced by drtA, drtE is also able to use cinnamoyl-CoA as a substrate. In Aspergillus calidoustus, this protein is FAD-dependent monooxygenase drtC.